The following is a 434-amino-acid chain: Alpha-enolase (434 aa).

Ser40 is a Mg(2+) binding site. Substrate-binding residues include His158 and Glu167. Residue Glu210 is the Proton donor of the active site. Residues Asp245, Glu293, and Asp318 each coordinate Mg(2+). Residues Glu293 and Asp318 each coordinate substrate. Lys343 (proton acceptor) is an active-site residue. Substrate-binding positions include 370–373 (SHRS) and Lys394.

Belongs to the enolase family. Homodimer. Requires Mg(2+) as cofactor.

It is found in the cytoplasm. It carries out the reaction (2R)-2-phosphoglycerate = phosphoenolpyruvate + H2O. Its pathway is carbohydrate degradation; glycolysis; pyruvate from D-glyceraldehyde 3-phosphate: step 4/5. In Gallus gallus (Chicken), this protein is Alpha-enolase (ENO1).